Consider the following 100-residue polypeptide: uncharacterized protein (100 aa).

This is an uncharacterized protein from Borreliella burgdorferi (strain ATCC 35210 / DSM 4680 / CIP 102532 / B31) (Borrelia burgdorferi).